We begin with the raw amino-acid sequence, 272 residues long: Zinc transporter ZupT (272 aa).

A run of 8 helical transmembrane segments spans residues 11–31 (IALA…LMVV), 40–60 (LLAF…LTEI), 76–96 (LGFT…MVID), 126–146 (LMTA…TFFA), 158–178 (AFAI…PVYF), 189–209 (ASLL…LALF), 211–231 (VLSD…MVFL), and 250–270 (VYGL…FRFA). Residues Asn-136 and Glu-139 each contribute to the Fe(2+) site. Positions 139 and 164 each coordinate Zn(2+). Fe(2+)-binding residues include Asn-165, Glu-168, and Glu-197. Residue Glu-168 participates in Zn(2+) binding.

It belongs to the ZIP transporter (TC 2.A.5) family. ZupT subfamily.

It is found in the cell inner membrane. The catalysed reaction is Zn(2+)(in) = Zn(2+)(out). Functionally, mediates zinc uptake. May also transport other divalent cations. The sequence is that of Zinc transporter ZupT from Xanthomonas axonopodis pv. citri (strain 306).